The sequence spans 327 residues: uncharacterized protein (327 aa).

The first 24 residues, 1–24 (MAMACLCLANISWATVCANSTGVA), serve as a signal peptide directing secretion.

This sequence belongs to the fimbrial protein family.

It localises to the fimbrium. Part of the sfmACDHF fimbrial operon. Could contribute to adhesion to various surfaces in specific environmental niches. Increases adhesion to eukaryotic T24 bladder epithelial cells in the absence of fim genes. This is an uncharacterized protein from Escherichia coli (strain K12).